The following is a 433-amino-acid chain: tRNA-2-methylthio-N(6)-dimethylallyladenosine synthase (433 aa).

In terms of domain architecture, MTTase N-terminal spans 3–118; that stretch reads KKLFIQTLGC…ISTAVKTPKF (116 aa). [4Fe-4S] cluster-binding residues include cysteine 12, cysteine 49, cysteine 81, cysteine 150, cysteine 154, and cysteine 157. A Radical SAM core domain is found at 136–369; it reads RGSPYKSHIN…QSRHNEILDE (234 aa). The region spanning 372-433 is the TRAM domain; sequence AAQEGKILDV…RMVLYGELAN (62 aa).

Belongs to the methylthiotransferase family. MiaB subfamily. In terms of assembly, monomer. It depends on [4Fe-4S] cluster as a cofactor.

Its subcellular location is the cytoplasm. The enzyme catalyses N(6)-dimethylallyladenosine(37) in tRNA + (sulfur carrier)-SH + AH2 + 2 S-adenosyl-L-methionine = 2-methylsulfanyl-N(6)-dimethylallyladenosine(37) in tRNA + (sulfur carrier)-H + 5'-deoxyadenosine + L-methionine + A + S-adenosyl-L-homocysteine + 2 H(+). Its function is as follows. Catalyzes the methylthiolation of N6-(dimethylallyl)adenosine (i(6)A), leading to the formation of 2-methylthio-N6-(dimethylallyl)adenosine (ms(2)i(6)A) at position 37 in tRNAs that read codons beginning with uridine. In Campylobacter curvus (strain 525.92), this protein is tRNA-2-methylthio-N(6)-dimethylallyladenosine synthase.